Consider the following 339-residue polypeptide: Dihydroorotate dehydrogenase (quinone) (339 aa).

FMN-binding positions include Ala-64 to Lys-68 and Thr-88. Lys-68 is a substrate binding site. A substrate-binding site is contributed by Asn-113 to Phe-117. Positions 141 and 174 each coordinate FMN. Residue Asn-174 participates in substrate binding. Ser-177 serves as the catalytic Nucleophile. Asn-179 provides a ligand contact to substrate. Residues Lys-219 and Thr-247 each coordinate FMN. Asn-248–Thr-249 lines the substrate pocket. FMN contacts are provided by residues Gly-270, Gly-299, and Tyr-320 to Ser-321.

The protein belongs to the dihydroorotate dehydrogenase family. Type 2 subfamily. As to quaternary structure, monomer. Requires FMN as cofactor.

It is found in the cell membrane. The enzyme catalyses (S)-dihydroorotate + a quinone = orotate + a quinol. Its pathway is pyrimidine metabolism; UMP biosynthesis via de novo pathway; orotate from (S)-dihydroorotate (quinone route): step 1/1. Catalyzes the conversion of dihydroorotate to orotate with quinone as electron acceptor. This chain is Dihydroorotate dehydrogenase (quinone), found in Haemophilus influenzae (strain 86-028NP).